The primary structure comprises 230 residues: Bidirectional sugar transporter SWEET16 (230 aa).

The Extracellular segment spans residues 1–3 (MAD). A helical transmembrane segment spans residues 4 to 24 (LSFYVGVIGNVISVLVFLSPV). One can recognise a MtN3/slv 1 domain in the interval 6 to 92 (FYVGVIGNVI…LIFLFFVPKS (87 aa)). Residues 25–40 (ETFWRIVQRRSTEEYE) are Cytoplasmic-facing. A helical membrane pass occupies residues 41–61 (CFPYICTLMSSSLWTYYGIVT). At 62 to 69 (PGEYLVST) the chain is on the extracellular side. The chain crosses the membrane as a helical span at residues 70 to 90 (VNGFGALAESIYVLIFLFFVP). Residues 91–93 (KSR) are Cytoplasmic-facing. A helical transmembrane segment spans residues 94-114 (FLKTVVVVLALNVCFPVIAIA). Topologically, residues 115-128 (GTRTLFGDANSRSS) are extracellular. The chain crosses the membrane as a helical span at residues 129–149 (SMGFICATLNIIMYGSPLSAI). Positions 129 to 212 (SMGFICATLN…LLIYAYYRNA (84 aa)) constitute a MtN3/slv 2 domain. The Cytoplasmic portion of the chain corresponds to 150-162 (KTVVTTRSVQFMP). The helical transmembrane segment at 163–183 (FWLSFFLFLNGAIWGVYALLL) threads the bilayer. Topologically, residues 184–185 (HD) are extracellular. The helical transmembrane segment at 186 to 206 (MFLLVPNGMGFFLGIMQLLIY) threads the bilayer. Over 207 to 230 (AYYRNAEPIVEDEEGLIPNQPLLA) the chain is Cytoplasmic.

This sequence belongs to the SWEET sugar transporter family. In terms of assembly, forms homooligomers and heterooligomers with SWEET1, SWEET7, SWEET8, SWEET9 and SWEET17. Mostly expressed in the cortex of mature roots, and, to a lower extent, in aerial organs such as leaves, stems, and flowers. Mainly present in vascular parenchyma cells, especially in the petiole vasculature, flower stalks and at the base of individual, not fully developed flowers.

The protein localises to the vacuole membrane. Mediates both low-affinity uptake and efflux of sugar across the vacuolar membrane. Regulates sugars homeostasis in leaves and roots by exporting/importing them through the tonoplast regarding metabolic demand. Acts as a vacuolar hexose transporter, such as glucose (Glc), fructose (Fru), and sucrose (Suc). The protein is Bidirectional sugar transporter SWEET16 of Arabidopsis thaliana (Mouse-ear cress).